Consider the following 466-residue polypeptide: Asparagine--tRNA ligase (466 aa).

It belongs to the class-II aminoacyl-tRNA synthetase family. Homodimer.

It is found in the cytoplasm. It catalyses the reaction tRNA(Asn) + L-asparagine + ATP = L-asparaginyl-tRNA(Asn) + AMP + diphosphate + H(+). The polypeptide is Asparagine--tRNA ligase (Shewanella baltica (strain OS195)).